Consider the following 476-residue polypeptide: H2.0-like homeobox protein (476 aa).

3 disordered regions span residues 121–170 (HLPQ…SSKD), 328–401 (WRHS…HQTT), and 413–476 (TASS…LAGL). Low complexity predominate over residues 158–168 (HHSGSAPAPSS). A DNA-binding region (homeobox) is located at residues 273–332 (RSWSRAVFSNLQRKGLEKRFEIQKYVTKPDRKQLAAMLGLTDAQVKVWFQNRRMKWRHSK). Composition is skewed to basic and acidic residues over residues 331–346 (SKEAQAQKDKDKEAGE) and 355–368 (EGEREERSPSRSEG). Positions 369–379 (EAESESSDSES) are enriched in acidic residues. Residues 386 to 397 (DTERTEGTERSL) are compositionally biased toward basic and acidic residues. Residues 413–446 (TASSSASGSSFSFSSSSSLGSSNGSAGSASSLGS) are compositionally biased toward low complexity. A compositionally biased stretch (polar residues) spans 455–464 (HQPSVTSGPQ).

This sequence belongs to the H2.0 homeobox family.

Its subcellular location is the nucleus. In terms of biological role, transcription factor required for TBX21/T-bet-dependent maturation of Th1 cells as well as maintenance of Th1-specific gene expression. Involved in embryogenesis and hematopoiesis. The sequence is that of H2.0-like homeobox protein (Hlx) from Rattus norvegicus (Rat).